A 168-amino-acid polypeptide reads, in one-letter code: Xanthine-guanine phosphoribosyltransferase (168 aa).

5-phospho-alpha-D-ribose 1-diphosphate contacts are provided by residues 46–47 (RG) and 101–109 (DDLVDSGVT). Asp-102 is a Mg(2+) binding site. Asp-105 contacts guanine. Xanthine is bound by residues Asp-105 and Val-148. Residues 105–109 (DSGVT) and 147–148 (WV) contribute to the GMP site.

The protein belongs to the purine/pyrimidine phosphoribosyltransferase family. XGPT subfamily. In terms of assembly, homotetramer. Mg(2+) is required as a cofactor.

Its subcellular location is the cell inner membrane. The catalysed reaction is GMP + diphosphate = guanine + 5-phospho-alpha-D-ribose 1-diphosphate. It carries out the reaction XMP + diphosphate = xanthine + 5-phospho-alpha-D-ribose 1-diphosphate. It catalyses the reaction IMP + diphosphate = hypoxanthine + 5-phospho-alpha-D-ribose 1-diphosphate. The protein operates within purine metabolism; GMP biosynthesis via salvage pathway; GMP from guanine: step 1/1. It functions in the pathway purine metabolism; XMP biosynthesis via salvage pathway; XMP from xanthine: step 1/1. In terms of biological role, purine salvage pathway enzyme that catalyzes the transfer of the ribosyl-5-phosphate group from 5-phospho-alpha-D-ribose 1-diphosphate (PRPP) to the N9 position of the 6-oxopurines guanine and xanthine to form the corresponding ribonucleotides GMP (guanosine 5'-monophosphate) and XMP (xanthosine 5'-monophosphate), with the release of PPi. To a lesser extent, also acts on hypoxanthine. The protein is Xanthine-guanine phosphoribosyltransferase of Gluconobacter oxydans (strain 621H) (Gluconobacter suboxydans).